The following is a 193-amino-acid chain: Segregation and condensation protein B (193 aa).

Belongs to the ScpB family. In terms of assembly, homodimer. Homodimerization may be required to stabilize the binding of ScpA to the Smc head domains. Component of a cohesin-like complex composed of ScpA, ScpB and the Smc homodimer, in which ScpA and ScpB bind to the head domain of Smc. The presence of the three proteins is required for the association of the complex with DNA.

It is found in the cytoplasm. Its function is as follows. Participates in chromosomal partition during cell division. May act via the formation of a condensin-like complex containing Smc and ScpA that pull DNA away from mid-cell into both cell halves. The sequence is that of Segregation and condensation protein B from Shouchella clausii (strain KSM-K16) (Alkalihalobacillus clausii).